A 508-amino-acid polypeptide reads, in one-letter code: Protection of telomeres protein tpz1 (508 aa).

Residues 2-223 are pot1-binding; that stretch reads SNCLKHPWLE…ENTTHGIYLE (222 aa). Disordered regions lie at residues 159–178, 235–269, and 282–358; these read QEAS…NSRD, VSET…PSLP, and PPPF…QSHR. The segment covering 327–347 has biased composition (polar residues); the sequence is STEQLNSSLTIERSQSIQSTD. Residues 348–358 show a composition bias toward basic and acidic residues; it reads SKQRVETQSHR. Positions 379–508 are ccq1/poz1-binding; the sequence is TIDDSTGKLL…KKIEEFRNKS (130 aa).

As to quaternary structure, interacts with ccq1, pot1 and poz1.

It is found in the chromosome. The protein localises to the telomere. Its subcellular location is the nucleus. In terms of biological role, telomeric DNA-binding protein that is required to protect the 3'-end telomeric overhang and involved in telomere length regulation. recruits poz1 and ccq1 to telomeres, regulating telomere length negatively and positively respectively. The chain is Protection of telomeres protein tpz1 (tpz1) from Schizosaccharomyces pombe (strain 972 / ATCC 24843) (Fission yeast).